A 4069-amino-acid polypeptide reads, in one-letter code: Cardiomyopathy-associated protein 5 (4069 aa).

23 disordered regions span residues 1–177 (MASR…SQVL), 341–387 (TVPS…DTPA), 442–525 (GLAA…EDSN), 538–558 (ESPL…VEHK), 597–705 (EYSV…VPSL), 732–793 (PSEE…RFTP), 844–872 (SSPD…APPL), 890–948 (LERY…FSPD), 979–1009 (TSPS…VSIP), 1041–1097 (ADEE…PEIP), 1160–1179 (VKEE…SVPA), 1205–1237 (RKEE…PESE), 1540–1575 (KETE…ELEN), 1594–1742 (PAVE…EEFQ), 1757–1809 (HPAD…ITEP), 1892–1988 (ENWM…VKLA), 2064–2175 (TISS…KKGI), 2187–2259 (FGSS…SGDG), 2385–2412 (PQQP…SIIL), 2425–2463 (SEDR…LENR), 2494–2527 (TQIT…NERP), 2653–2706 (QEGN…VGTQ), and 2750–2862 (SSRD…SDVP). Residues 27 to 47 (ETEEESEGEEDETAAESEEEP) show a composition bias toward acidic residues. The segment covering 48–62 (DSRLSDQDEEGKIKQ) has biased composition (basic and acidic residues). A compositionally biased stretch (polar residues) spans 84–119 (TWETNSSRSSTPWASEESQTSGVCSREGSTVNSPPG). The segment covering 130–153 (KVRKRTHKSKHGSPSLRRKGNRKR) has biased composition (basic residues). A Phosphoserine modification is found at Ser155. 2 stretches are compositionally biased toward polar residues: residues 156-177 (FESQ…SQVL) and 341-350 (TVPSYSSSGR). The span at 489–499 (LEPSISLSEPL) shows a compositional bias: low complexity. The segment covering 500 to 510 (MLEEPEKEEIE) has biased composition (acidic residues). Ser631 carries the phosphoserine modification. Positions 640 to 659 (AYSPAAAPTSESSLSPSTTE) are enriched in low complexity. Composition is skewed to polar residues over residues 664 to 673 (NQSPLFSTVT), 692 to 701 (PDSTSASEYS), and 752 to 775 (PSLS…TATS). Positions 1049–1063 (TAATPVSEQFSSSQK) are enriched in polar residues. A compositionally biased stretch (basic and acidic residues) spans 1085–1094 (DKSEKAEIKP). The segment covering 1214–1223 (QEATAHVSQD) has biased composition (polar residues). Positions 1621–1630 (EPEKKDKPHQ) are enriched in basic and acidic residues. Polar residues predominate over residues 1639–1662 (SEFSSDLGRQSGSIGTKQAKSPIT). Composition is skewed to basic and acidic residues over residues 1668–1687 (VLEK…ENRE), 1704–1714 (LREESQNEEIK), and 1786–1795 (ILDKLSEETG). Over residues 1796–1808 (HPNSSQVLQSITE) the composition is skewed to polar residues. Positions 1935–1955 (SKDHTCEVRKQVLPHSAEESH) are enriched in basic and acidic residues. Residues 1956-1980 (LSSQEAVSALDTSSGNTETLSSKSY) are compositionally biased toward polar residues. Residues 2085-2124 (NEKEAHRSTPPFPEEKPLEESKMVQSKVIDDADEGKKPSP) are compositionally biased toward basic and acidic residues. The span at 2145-2155 (SPESPEVTQNP) shows a compositional bias: polar residues. Composition is skewed to basic and acidic residues over residues 2162-2172 (AKPDLPEEKGK) and 2232-2250 (KPAD…DEPR). A compositionally biased stretch (polar residues) spans 2387–2399 (QPKSASSNFASKN). At Ser2404 the chain carries Phosphoserine. A compositionally biased stretch (basic and acidic residues) spans 2441-2461 (ISEEETKLRSVSPTEKKDNLE). Basic and acidic residues-rich tracts occupy residues 2661 to 2681 (KSSR…ESEL), 2750 to 2769 (SSRD…ESEL), and 2777 to 2804 (ITKE…ETKS). Phosphoserine is present on Ser2813. The span at 2830–2847 (AVKKKEMPRSELTPERHT) shows a compositional bias: basic and acidic residues. Residues 2964–2988 (SIDQEESEQMQDKLEYLEEKASFKT) adopt a coiled-coil conformation. A compositionally biased stretch (basic and acidic residues) spans 3015–3031 (PLKENKQKETHKTKEEI). 5 disordered regions span residues 3015-3037 (PLKE…DSET), 3119-3156 (EKGH…PGMP), 3204-3231 (KKKE…SDTD), 3386-3421 (SGAT…QDEY), and 3465-3495 (EFAS…SSEV). A required for RYR2 clustering region spans residues 3052-3365 (YFEKYTLIDY…GSHGNEVGNA (314 aa)). Over residues 3128-3138 (PETQSQNSADR) the composition is skewed to polar residues. The span at 3139-3150 (NVSKDTKRDVDS) shows a compositional bias: basic and acidic residues. Residues 3213–3227 (EGDSVNSEASFPSRN) show a composition bias toward polar residues. Position 3228 is a phosphoserine (Ser3228). Residues 3477–3489 (EQKELGSERKEED) show a composition bias toward basic and acidic residues. Positions 3517–3544 (KCPISATDKVFGTHKDHEVSTLDTAISA) are amphipathic helix H1. Positions 3544 to 3653 (AVKVQLAEFL…REAEELDEAV (110 aa)) form a coiled coil. Residues 3545 to 3672 (VKVQLAEFLE…ERLLSAMEST (128 aa)) are B-box coiled-coil; BBC. Residues 3631–3648 (SMDTAKDTLETIVREAEE) are amphipathic helix H2. 2 Fibronectin type-III domains span residues 3704 to 3805 (VPQP…TAPS) and 3806 to 3898 (TPVI…TRGT). The amphipathic helix H3 stretch occupies residues 3751-3767 (EVNELVEEYRLTVKESY). The region spanning 3880-4065 (NAFGTSEQSE…LHLGIEPPDS (186 aa)) is the B30.2/SPRY domain.

In terms of assembly, interacts with PRKAR2A. Interacts with ACTN2 and DTNBP1/dysbindin. Interacts with DES. Interacts with DMD/dystrophin. Interacts with the calcineurin catalytic subunit PPP3CA. Interacts with TTN. Interacts with CAPN3; this interaction, which results in CMYA5 proteolysis, may protect CAPN3 from autolysis. Interacts with FSD2. Identified in a complex composed of FSD2, CMYA5 and RYR2. In terms of processing, phosphorylated by PKA. As to expression, expressed in skeletal muscle; at a strong level and in heart.

It is found in the nucleus. Its subcellular location is the sarcoplasmic reticulum. It localises to the cytoplasm. The protein resides in the perinuclear region. The protein localises to the myofibril. It is found in the sarcomere. Its subcellular location is the m line. In terms of biological role, may serve as an anchoring protein that mediates the subcellular compartmentation of protein kinase A (PKA) via binding to PRKAR2A. May function as a repressor of calcineurin-mediated transcriptional activity. May attenuate calcineurin ability to induce slow-fiber gene program in muscle and may negatively modulate skeletal muscle regeneration. Plays a role in the assembly of ryanodine receptor (RYR2) clusters in striated muscle. This is Cardiomyopathy-associated protein 5 (CMYA5) from Homo sapiens (Human).